Here is a 206-residue protein sequence, read N- to C-terminus: Large ribosomal subunit protein uL4 (206 aa).

Positions 43–52 are enriched in polar residues; the sequence is NKRQGTQSAK. The tract at residues 43-86 is disordered; that stretch reads NKRQGTQSAKTRAEVSGGGRKPWRQKGTGHARQGSTRSPQWKGG.

This sequence belongs to the universal ribosomal protein uL4 family. Part of the 50S ribosomal subunit.

In terms of biological role, one of the primary rRNA binding proteins, this protein initially binds near the 5'-end of the 23S rRNA. It is important during the early stages of 50S assembly. It makes multiple contacts with different domains of the 23S rRNA in the assembled 50S subunit and ribosome. Its function is as follows. Forms part of the polypeptide exit tunnel. The sequence is that of Large ribosomal subunit protein uL4 from Lachnoclostridium phytofermentans (strain ATCC 700394 / DSM 18823 / ISDg) (Clostridium phytofermentans).